A 290-amino-acid polypeptide reads, in one-letter code: Prepilin leader peptidase/N-methyltransferase (290 aa).

Residues 13–33 (AFVLCTILLGLLVGSFLNVVV) form a helical membrane-spanning segment. The Zn(2+) site is built by Cys72, Cys75, Cys97, and Cys100. 5 helical membrane passes run 128-148 (FTWQ…MSLI), 158-178 (VLVL…LFAS), 183-203 (LFGA…FKLV), 228-248 (ILPL…VIML), and 261-276 (FGPY…LLWG).

It belongs to the peptidase A24 family. Requires Zn(2+) as cofactor.

The protein localises to the cell inner membrane. It catalyses the reaction Typically cleaves a -Gly-|-Phe- bond to release an N-terminal, basic peptide of 5-8 residues from type IV prepilin, and then N-methylates the new N-terminal amino group, the methyl donor being S-adenosyl-L-methionine.. Functionally, plays an essential role in type IV pili and type II pseudopili formation by proteolytically removing the leader sequence from substrate proteins and subsequently monomethylating the alpha-amino group of the newly exposed N-terminal phenylalanine. Substrates include proteins required for pilus biogenesis PilE, PilV, PilW, and PilX as well as some components of the type II general secretory apparatus GspG, GspH, GspI and GspJ. This is Prepilin leader peptidase/N-methyltransferase (pilD) from Pseudomonas aeruginosa (strain ATCC 15692 / DSM 22644 / CIP 104116 / JCM 14847 / LMG 12228 / 1C / PRS 101 / PAO1).